A 231-amino-acid chain; its full sequence is 7-cyano-7-deazaguanine synthase (231 aa).

Residue 17–27 (FSGGMDSFTLL) coordinates ATP. Residues cysteine 193, cysteine 201, cysteine 204, and cysteine 207 each contribute to the Zn(2+) site.

The protein belongs to the QueC family. The cofactor is Zn(2+).

The catalysed reaction is 7-carboxy-7-deazaguanine + NH4(+) + ATP = 7-cyano-7-deazaguanine + ADP + phosphate + H2O + H(+). It functions in the pathway purine metabolism; 7-cyano-7-deazaguanine biosynthesis. In terms of biological role, catalyzes the ATP-dependent conversion of 7-carboxy-7-deazaguanine (CDG) to 7-cyano-7-deazaguanine (preQ(0)). The sequence is that of 7-cyano-7-deazaguanine synthase from Hahella chejuensis (strain KCTC 2396).